A 307-amino-acid polypeptide reads, in one-letter code: Mycothiol acetyltransferase (307 aa).

N-acetyltransferase domains are found at residues 12 to 152 and 160 to 307; these read TRTD…APIP and VTLR…YQRS. Residue Glu43 coordinates 1D-myo-inositol 2-(L-cysteinylamino)-2-deoxy-alpha-D-glucopyranoside. 87-89 is an acetyl-CoA binding site; sequence LAV. 3 residues coordinate 1D-myo-inositol 2-(L-cysteinylamino)-2-deoxy-alpha-D-glucopyranoside: Glu187, Lys227, and Glu239. Acetyl-CoA-binding positions include 243–245 and 250–256; these read LGV and HGGGLGK. Position 278 (Tyr278) interacts with 1D-myo-inositol 2-(L-cysteinylamino)-2-deoxy-alpha-D-glucopyranoside.

The protein belongs to the acetyltransferase family. MshD subfamily. In terms of assembly, monomer.

The catalysed reaction is 1D-myo-inositol 2-(L-cysteinylamino)-2-deoxy-alpha-D-glucopyranoside + acetyl-CoA = mycothiol + CoA + H(+). In terms of biological role, catalyzes the transfer of acetyl from acetyl-CoA to desacetylmycothiol (Cys-GlcN-Ins) to form mycothiol. The polypeptide is Mycothiol acetyltransferase (Salinispora arenicola (strain CNS-205)).